Here is a 316-residue protein sequence, read N- to C-terminus: Fe-S cluster assembly protein DRE2 (316 aa).

The segment at Val7–Val139 is N-terminal SAM-like domain. A linker region spans residues Thr140 to Leu208. Residues Cys218, Cys229, Cys232, and Cys234 each contribute to the [2Fe-2S] cluster site. Residues Cys218 to Cys234 form a fe-S binding site A region. The [4Fe-4S] cluster site is built by Cys279, Cys282, Cys290, and Cys293. Short sequence motifs (cx2C motif) lie at residues Cys279–Cys282 and Cys290–Cys293. Positions Cys279–Cys293 are fe-S binding site B.

This sequence belongs to the anamorsin family. In terms of assembly, monomer. Interacts with TAH18. Interacts with MIA40. [2Fe-2S] cluster serves as cofactor. Requires [4Fe-4S] cluster as cofactor.

Its subcellular location is the cytoplasm. The protein resides in the mitochondrion intermembrane space. Its function is as follows. Component of the cytosolic iron-sulfur (Fe-S) protein assembly (CIA) machinery required for the maturation of extramitochondrial Fe-S proteins. Part of an electron transfer chain functioning in an early step of cytosolic Fe-S biogenesis, facilitating the de novo assembly of a [4Fe-4S] cluster on the scaffold complex CFD1-NBP35. Electrons are transferred to DRE2 from NADPH via the FAD- and FMN-containing protein TAH18. TAH18-DRE2 are also required for the assembly of the diferric tyrosyl radical cofactor of ribonucleotide reductase (RNR), probably by providing electrons for reduction during radical cofactor maturation in the catalytic small subunit RNR2. In Fusarium vanettenii (strain ATCC MYA-4622 / CBS 123669 / FGSC 9596 / NRRL 45880 / 77-13-4) (Fusarium solani subsp. pisi), this protein is Fe-S cluster assembly protein DRE2.